The primary structure comprises 476 residues: Aspartyl/glutamyl-tRNA(Asn/Gln) amidotransferase subunit B (476 aa).

The protein belongs to the GatB/GatE family. GatB subfamily. In terms of assembly, heterotrimer of A, B and C subunits.

It catalyses the reaction L-glutamyl-tRNA(Gln) + L-glutamine + ATP + H2O = L-glutaminyl-tRNA(Gln) + L-glutamate + ADP + phosphate + H(+). The enzyme catalyses L-aspartyl-tRNA(Asn) + L-glutamine + ATP + H2O = L-asparaginyl-tRNA(Asn) + L-glutamate + ADP + phosphate + 2 H(+). In terms of biological role, allows the formation of correctly charged Asn-tRNA(Asn) or Gln-tRNA(Gln) through the transamidation of misacylated Asp-tRNA(Asn) or Glu-tRNA(Gln) in organisms which lack either or both of asparaginyl-tRNA or glutaminyl-tRNA synthetases. The reaction takes place in the presence of glutamine and ATP through an activated phospho-Asp-tRNA(Asn) or phospho-Glu-tRNA(Gln). The chain is Aspartyl/glutamyl-tRNA(Asn/Gln) amidotransferase subunit B from Neisseria meningitidis serogroup C / serotype 2a (strain ATCC 700532 / DSM 15464 / FAM18).